The following is a 210-amino-acid chain: MDTFDAIYQRRSVKHFDPDHRLTAEEERKLHEAAIQAPTSFNIQLWRFLIIRDPQLRQTIREKYGNQAQMTDASLLILVAADVNAWDKDPARYWRNAPREVANYLVGAIASFYGGKPQLQRDEAQRSIGMAMQNLMLAAKAMGYDSCPMIGFDLQKVAELVKLPADYAIGPMVAIGKRTEDAPGKRRSNSPGRIPLGKLLCLTKVWCLAI.

This sequence belongs to the nitroreductase family. Requires FMN as cofactor.

Controls resistance to the herbicide Dinoseb and metronidazole. Involved in detoxification of Dinoseb via the reduction of the nitro group(s) and this process is accompanied by the formation of toxic superoxide anions. The protein is Protein DrgA (drgA) of Synechocystis sp. (strain ATCC 27184 / PCC 6803 / Kazusa).